The primary structure comprises 492 residues: MLLRTMAATSPRPPPSTSLTSQQPPSPPSQLPLRTMPGSYGWPLVGPLSDRLDYFWFQGPDKFFRTRAEKYKSTVFRTNIPPTFPFFGNVNPNIVAVLDVKSFSHLFDMDLVDKRDVLIGDFRPSLGFYGGVCVGVNLDTTEPKHAKIKGFAMETLKRSSKVWLQELRSNLNIFWGTIESEISKNGAASYIFPLQRCIFSFLCASLAGVDASVSPDIAENGWKTINTWLALQVIPTAKLGVVPQPLEEILLHTWPYPSLLIAGNYKKLYNFIDENAGDCLRLGQEEFRLTRDEAIQNLLFVLGFNAYGGFSVFLPSLIGRITGDNSGLQERIRTEVRRVCGSGSDLNFKTVNEMELVKSVVYETLRFNPPVPLQFARARKDFQISSHDAVFEVKKGELLCGYQPLVMRDANVFDEPEEFKPDRYVGETGSELLNYLYWSNGPQTGTPSASNKQCAAKDIVTLTASLLVADLFLRYDTITGDSGSIKAVVKAK.

Residues 1–33 (MLLRTMAATSPRPPPSTSLTSQQPPSPPSQLPL) form a disordered region. A chloroplast-targeting transit peptide spans 1–34 (MLLRTMAATSPRPPPSTSLTSQQPPSPPSQLPLR). C454 is a binding site for heme.

The protein belongs to the cytochrome P450 family. Requires heme as cofactor. Expressed in roots, leaves, flowers and siliques.

It is found in the plastid. It localises to the chloroplast. Its function is as follows. Catalyzes the conversion of (9Z,11E,15Z)-(13S)-hydroperoxyoctadeca-9,11,15-trienoate to (9Z)-12-oxo-dodec-9-enoate and cis-3-hexenal. Possesses low activity toward (9Z,11E)-(13S)-13-hydroperoxyoctadeca-9,11-dienoate. Required for the synthesis of the green leaf volatiles (GLVs) hexanal and trans-2-hexenal. This is Linolenate hydroperoxide lyase, chloroplastic from Arabidopsis thaliana (Mouse-ear cress).